Reading from the N-terminus, the 524-residue chain is Zinc finger protein 346 (524 aa).

7 consecutive Matrin-type zinc fingers follow at residues 34 to 64, 92 to 126, 162 to 192, 226 to 260, 286 to 316, 343 to 373, and 400 to 430; these read TQCK…KVRR, DRSK…LRLR, KFCK…QETK, GKGF…LMSM, FSCD…HLKS, FSCD…HLMS, and FSCD…QLMS. 8 residues coordinate Zn(2+): cysteine 36, cysteine 39, histidine 52, histidine 58, cysteine 97, cysteine 100, histidine 113, and histidine 119. 2 disordered regions span residues 453–486 and 494–513; these read SAGG…GSLP and PLYP…TMSP. The span at 476–486 shows a compositional bias: low complexity; that stretch reads PKGPSSFGSLP.

The protein resides in the nucleus. The protein localises to the cytoplasm. In terms of biological role, binds preferentially to dsRNA, but also to RNA-DNA hybrids. The protein is Zinc finger protein 346 of Xenopus laevis (African clawed frog).